Reading from the N-terminus, the 515-residue chain is MIGVISTAYFTMKDKHSIKTVKKYWWKNCVIQHVKYHGKTFIIATVGYGKANAAMTITYLLEKYPGLQTILNVDLALSTNDKHDTGDTTISTKFIYRDADLTVFKDIKYGQIVNEPESFQFDGEFAKVVKDFKLGLTEGVTGTADMLIYNSKQFKEMVDKYGHTIDVIDTEAGAIAQVAKKSSINYIALKIIYNNALSPWDNDPIHKFKMYETVNTLKYLLRRLFNLLSSNYIIDLSQCSQDDLDSINELFEIKHDQWIKLFKPNTHKVLSGFGPSLMLVDKQEKTPVALDIIQVIRSKTKEAEGPSKVILGEDEWKNAPKKWLRKLLFLEQVRVNDDELLWNKSAKYDLNNEKLYKIETVETVANEIAAAIAEKCQDKSSYTYNGATVPEKYLLVNCDARISFYITHNQSHEFVEDKNFGTQLVSNEFLKYLNEALKDVDSPYQQIVIYMTIPALDYRKISVFIPSNKGANRGVKFVALNQKLQRDYTVVDITRNDYDPIKVGSFKVTIRLKSE.

At Met-1 the chain carries Blocked amino end (Met). 4 helical regions span residues 21–34 (VKKY…IQHV), 206–228 (HKFK…FNLL), 357–376 (KIET…AEKC), and 426–440 (SNEF…LKDV).

It is found in the cytoplasm. Its subcellular location is the cytoskeleton. Its function is as follows. Acts as a cytoskeletal structure involved in the shape and motility of spiroplasmas. In Spiroplasma citri, this protein is Fibril protein.